The primary structure comprises 208 residues: Cytochrome c biogenesis ATP-binding export protein CcmA (208 aa).

In terms of domain architecture, ABC transporter spans 3-206 (LSGKDLAAHR…LEKFVPSQER (204 aa)). 35–42 (GPNGIGKS) is an ATP binding site.

Belongs to the ABC transporter superfamily. CcmA exporter (TC 3.A.1.107) family. The complex is composed of two ATP-binding proteins (CcmA) and two transmembrane proteins (CcmB).

The protein localises to the cell inner membrane. The catalysed reaction is heme b(in) + ATP + H2O = heme b(out) + ADP + phosphate + H(+). Part of the ABC transporter complex CcmAB involved in the biogenesis of c-type cytochromes; once thought to export heme, this seems not to be the case, but its exact role is uncertain. Responsible for energy coupling to the transport system. The protein is Cytochrome c biogenesis ATP-binding export protein CcmA of Bartonella quintana (strain Toulouse) (Rochalimaea quintana).